A 91-amino-acid chain; its full sequence is PqqA binding protein (91 aa).

The protein belongs to the PqqD family. As to quaternary structure, monomer. Interacts with PqqE.

It participates in cofactor biosynthesis; pyrroloquinoline quinone biosynthesis. Its function is as follows. Functions as a PqqA binding protein and presents PqqA to PqqE, in the pyrroloquinoline quinone (PQQ) biosynthetic pathway. This chain is PqqA binding protein, found in Pseudomonas fluorescens (strain ATCC BAA-477 / NRRL B-23932 / Pf-5).